The following is a 564-amino-acid chain: Ribonuclease J (564 aa).

His-85, His-87, Asp-89, His-90, His-153, and Asp-175 together coordinate Zn(2+). 375–379 contacts substrate; it reads HVSGH. His-401 is a binding site for Zn(2+).

The protein belongs to the metallo-beta-lactamase superfamily. RNA-metabolizing metallo-beta-lactamase-like family. Bacterial RNase J subfamily. In terms of assembly, homodimer, may be a subunit of the RNA degradosome. Zn(2+) serves as cofactor.

Its subcellular location is the cytoplasm. Its function is as follows. An RNase that has 5'-3' exonuclease and possibly endonuclease activity. Plays a role in 16S and 23S rRNA processing. Might have a role in mRNA maturation and/or decay. This is Ribonuclease J from Sinorhizobium meliloti (strain Sm2011 / Rm2011 / 2011).